The primary structure comprises 24 residues: Formate ester dehydrogenase gamma chain (24 aa).

As to quaternary structure, heterotrimer composed of an alpha, a beta and a gamma chain.

This chain is Formate ester dehydrogenase gamma chain, found in Amycolatopsis methanolica.